A 241-amino-acid polypeptide reads, in one-letter code: uncharacterized protein (241 aa).

Residues 84–216 form the GGDEF domain; that stretch reads TVVSLVVCDL…APGPVVAGRD (133 aa). Residues 215–241 are disordered; sequence RDGEVVRLADSPPKSAHDRRRLRGNRP. A compositionally biased stretch (basic residues) spans 231 to 241; it reads HDRRRLRGNRP.

This is an uncharacterized protein from Streptomyces griseus.